Consider the following 260-residue polypeptide: Imidazole glycerol phosphate synthase subunit HisF (260 aa).

Catalysis depends on residues D12 and D131.

Belongs to the HisA/HisF family. As to quaternary structure, heterodimer of HisH and HisF.

The protein localises to the cytoplasm. It carries out the reaction 5-[(5-phospho-1-deoxy-D-ribulos-1-ylimino)methylamino]-1-(5-phospho-beta-D-ribosyl)imidazole-4-carboxamide + L-glutamine = D-erythro-1-(imidazol-4-yl)glycerol 3-phosphate + 5-amino-1-(5-phospho-beta-D-ribosyl)imidazole-4-carboxamide + L-glutamate + H(+). It functions in the pathway amino-acid biosynthesis; L-histidine biosynthesis; L-histidine from 5-phospho-alpha-D-ribose 1-diphosphate: step 5/9. In terms of biological role, IGPS catalyzes the conversion of PRFAR and glutamine to IGP, AICAR and glutamate. The HisF subunit catalyzes the cyclization activity that produces IGP and AICAR from PRFAR using the ammonia provided by the HisH subunit. In Corynebacterium jeikeium (strain K411), this protein is Imidazole glycerol phosphate synthase subunit HisF.